Here is an 876-residue protein sequence, read N- to C-terminus: Leucine--tRNA ligase (876 aa).

Residues 43 to 53 carry the 'HIGH' region motif; the sequence is PYPSGRIHMGH. Positions 630-634 match the 'KMSKS' region motif; it reads KMSKS. Position 633 (lysine 633) interacts with ATP.

The protein belongs to the class-I aminoacyl-tRNA synthetase family.

The protein localises to the cytoplasm. The catalysed reaction is tRNA(Leu) + L-leucine + ATP = L-leucyl-tRNA(Leu) + AMP + diphosphate. The polypeptide is Leucine--tRNA ligase (Methylocella silvestris (strain DSM 15510 / CIP 108128 / LMG 27833 / NCIMB 13906 / BL2)).